A 109-amino-acid chain; its full sequence is Small ribosomal subunit protein uS17 (109 aa).

Belongs to the universal ribosomal protein uS17 family. As to quaternary structure, part of the 30S ribosomal subunit.

One of the primary rRNA binding proteins, it binds specifically to the 5'-end of 16S ribosomal RNA. This Methanosarcina mazei (strain ATCC BAA-159 / DSM 3647 / Goe1 / Go1 / JCM 11833 / OCM 88) (Methanosarcina frisia) protein is Small ribosomal subunit protein uS17.